The primary structure comprises 332 residues: Cytoskeleton protein RodZ (332 aa).

Residues 1-111 (MNTETTQDTT…LKKSRKKRDG (111 aa)) are Cytoplasmic-facing. One can recognise an HTH cro/C1-type domain in the interval 19-71 (LREARERLGLTQQTIAERLCLKITTVRDIEDGTTPADLAPTFLRGYIRSYAKL). Positions 30-49 (QQTIAERLCLKITTVRDIED) form a DNA-binding region, H-T-H motif. Residues 112–132 (WLMIITWLVVLVVLGLTGAWW) traverse the membrane as a helical; Signal-anchor for type II membrane protein segment. Residues 133-332 (WQNHQAQQAE…QVARLTLTAE (200 aa)) lie on the Periplasmic side of the membrane. Positions 149-225 (HASSMQSQTE…PSQANATQSQ (77 aa)) are disordered. 2 stretches are compositionally biased toward polar residues: residues 151 to 160 (SSMQSQTEGQ) and 168 to 182 (SAPQ…AATP). The segment covering 190–225 (SATIAATPSTPPSSTTASSAAPSSQSPSQANATQSQ) has biased composition (low complexity).

The protein belongs to the RodZ family.

Its subcellular location is the cell inner membrane. In terms of biological role, cytoskeletal protein that is involved in cell-shape control through regulation of the length of the long axis. In Pectobacterium atrosepticum (strain SCRI 1043 / ATCC BAA-672) (Erwinia carotovora subsp. atroseptica), this protein is Cytoskeleton protein RodZ.